We begin with the raw amino-acid sequence, 609 residues long: Elongation factor 4 (609 aa).

A tr-type G domain is found at 11-193 (SRIRNFSIIA…QIVEKVPAPS (183 aa)). GTP contacts are provided by residues 23-28 (DHGKST) and 140-143 (NKID).

Belongs to the TRAFAC class translation factor GTPase superfamily. Classic translation factor GTPase family. LepA subfamily.

It localises to the cell membrane. The enzyme catalyses GTP + H2O = GDP + phosphate + H(+). Its function is as follows. Required for accurate and efficient protein synthesis under certain stress conditions. May act as a fidelity factor of the translation reaction, by catalyzing a one-codon backward translocation of tRNAs on improperly translocated ribosomes. Back-translocation proceeds from a post-translocation (POST) complex to a pre-translocation (PRE) complex, thus giving elongation factor G a second chance to translocate the tRNAs correctly. Binds to ribosomes in a GTP-dependent manner. This is Elongation factor 4 from Halalkalibacterium halodurans (strain ATCC BAA-125 / DSM 18197 / FERM 7344 / JCM 9153 / C-125) (Bacillus halodurans).